The following is a 393-amino-acid chain: Phosphoglycerate kinase (393 aa).

Residues 21–23, arginine 37, 60–63, arginine 119, and arginine 152 each bind substrate; these read DFN and HLGR. ATP-binding positions include lysine 202, glutamate 323, and 349-352; that span reads GGDT.

This sequence belongs to the phosphoglycerate kinase family. In terms of assembly, monomer.

It is found in the cytoplasm. It carries out the reaction (2R)-3-phosphoglycerate + ATP = (2R)-3-phospho-glyceroyl phosphate + ADP. It participates in carbohydrate degradation; glycolysis; pyruvate from D-glyceraldehyde 3-phosphate: step 2/5. The polypeptide is Phosphoglycerate kinase (Desulforudis audaxviator (strain MP104C)).